A 190-amino-acid chain; its full sequence is Threonylcarbamoyl-AMP synthase (190 aa).

The 184-residue stretch at 7–190 folds into the YrdC-like domain; sequence RDAIAAAIDV…ALTGELFRQG (184 aa).

The protein belongs to the SUA5 family. TsaC subfamily.

Its subcellular location is the cytoplasm. The enzyme catalyses L-threonine + hydrogencarbonate + ATP = L-threonylcarbamoyladenylate + diphosphate + H2O. Required for the formation of a threonylcarbamoyl group on adenosine at position 37 (t(6)A37) in tRNAs that read codons beginning with adenine. Catalyzes the conversion of L-threonine, HCO(3)(-)/CO(2) and ATP to give threonylcarbamoyl-AMP (TC-AMP) as the acyladenylate intermediate, with the release of diphosphate. The polypeptide is Threonylcarbamoyl-AMP synthase (Escherichia coli O9:H4 (strain HS)).